A 907-amino-acid polypeptide reads, in one-letter code: Potassium channel AKT3 (907 aa).

Residues 1–75 (MPTTKCAVPL…YDRRYELWNN (75 aa)) lie on the Cytoplasmic side of the membrane. A helical transmembrane segment spans residues 76 to 96 (YLILLVVYSAWVTPFEFGFVP). Residues 97–102 (EPAGAL) are Extracellular-facing. The helical transmembrane segment at 103 to 123 (AAADNAVNAFFAVDIVLTFFV) threads the bilayer. The Cytoplasmic portion of the chain corresponds to 124-146 (AYTDPKTFLLQDDPRKIALRYIT). The chain crosses the membrane as a helical span at residues 147 to 167 (TWFVLDVVATIPTELARRILP). Topologically, residues 168–174 (PDLRSYG) are extracellular. Residues 175 to 195 (FFGILRLWRLHRVGILFARLE) traverse the membrane as a helical; Voltage-sensor segment. The Cytoplasmic segment spans residues 196–209 (KDRKFSYFWVRCVK). A helical membrane pass occupies residues 210-230 (LVCVTLFAVHCSACFYYLLAD). At 231 to 257 (RYPDPTNTWISAYMPNFHKASIWSRYV) the chain is on the extracellular side. An intramembrane region (pore-forming) is located at residues 258–277 (ASMYWSITTLSTVGYGDMHA). Residues 278–288 (ENTGEMVFTTT) lie on the Extracellular side of the membrane. Residues 289–309 (YMLFNLGLTAYIIGNMTNLVV) form a helical membrane-spanning segment. Residues 310–907 (HGTSRTRKFR…VPPENRSRNQ (598 aa)) lie on the Cytoplasmic side of the membrane. 388–512 (LFEGVSNDLI…TIVMNNLIQY (125 aa)) is a binding site for a nucleoside 3',5'-cyclic phosphate. ANK repeat units lie at residues 539–568 (DFPITLCFAASKGDSFLLHQLLKRGLDPNE), 572–601 (YGRTALHIAASNGNEQCVRLLLENGADSNS), 605–634 (EGRVPLWEALCRRHQTVVQLLVDAGADLSG), 636–665 (DAAPYARVAVEQNDAALLGEIVRHGGDVSG), and 670–699 (DGTTALHRAVLDGNVQMARLLLEHGADADA). Disordered stretches follow at residues 726–779 (ATRH…TPQR) and 801–824 (GGYRGGGGGGGAAAERERSSSSPP). The segment covering 754 to 776 (SSPSSSSRRGRTSSTSAASARST) has biased composition (low complexity). The segment covering 803 to 812 (YRGGGGGGGA) has biased composition (gly residues). In terms of domain architecture, KHA spans 827–907 (RVAISCPESR…VPPENRSRNQ (81 aa)).

The protein belongs to the potassium channel family. Plant (TC 1.A.1.4) subfamily.

It localises to the membrane. In terms of biological role, probable inward-rectifying potassium channel. Assuming opened or closed conformations in response to the voltage difference across the membrane, the channel is activated by hyperpolarization. This Oryza sativa subsp. japonica (Rice) protein is Potassium channel AKT3.